The primary structure comprises 150 residues: Large ribosomal subunit protein bL9 (150 aa).

It belongs to the bacterial ribosomal protein bL9 family.

In terms of biological role, binds to the 23S rRNA. This chain is Large ribosomal subunit protein bL9, found in Corynebacterium jeikeium (strain K411).